The following is a 325-amino-acid chain: Odorant receptor 131-2 (325 aa).

At 1–22 (MNSTSNSSLGNTFISKTLKEKS) the chain is on the extracellular side. N2 and N6 each carry an N-linked (GlcNAc...) asparagine glycan. Residues 23 to 43 (LTVQVLVGILLYVNGLMIFTF) traverse the membrane as a helical segment. The Cytoplasmic portion of the chain corresponds to 44–54 (LKKETFRDTRY). The helical transmembrane segment at 55-75 (ILFAQTLFVDSALMLFADLTL) threads the bilayer. Topologically, residues 76 to 91 (VGSAYELFIHIISCYI) are extracellular. Residues C89 and C170 are joined by a disulfide bond. The chain crosses the membrane as a helical span at residues 92 to 112 (FCTVMALLSICSPVTLVAMCL). Topologically, residues 113-135 (ERYVAICLPLRHASISSPKNTIN) are cytoplasmic. The chain crosses the membrane as a helical span at residues 136 to 156 (GLLIIWGVSSVIPLFIFIVSF). Topologically, residues 157-190 (TYTPPNAMNSYVVCSNDVMFQVKWLAEMRALSQQ) are extracellular. The chain crosses the membrane as a helical span at residues 191–211 (LLFVIMLCIVGSTYIKIMVAA). Residues 212 to 227 (KSASAENKKSTYKGLR) lie on the Cytoplasmic side of the membrane. A helical transmembrane segment spans residues 228 to 248 (TVILHGLQLILGMMQLITPYI). The Extracellular portion of the chain corresponds to 249–267 (DILTLKVDIMLFINVKFSN). The chain crosses the membrane as a helical span at residues 268 to 285 (FMLFWIFPRCLSPLVYGL). The Cytoplasmic portion of the chain corresponds to 286–325 (RDKKFYNALKYYAFCGIYVCKKHKIKDSKTIRGAVSIAIY).

It belongs to the G-protein coupled receptor 1 family. As to quaternary structure, homodimer. Monomer.

The protein localises to the cell membrane. It localises to the cytoplasm. In terms of biological role, probable olfactory receptor. The polypeptide is Odorant receptor 131-2 (Danio rerio (Zebrafish)).